Here is a 256-residue protein sequence, read N- to C-terminus: uncharacterized protein (256 aa).

The HTH deoR-type domain maps to proline 7–leucine 62. A DNA-binding region (H-T-H motif) is located at residues isoleucine 24–aspartate 43.

This is an uncharacterized protein from Haemophilus influenzae (strain ATCC 51907 / DSM 11121 / KW20 / Rd).